A 395-amino-acid chain; its full sequence is Type II restriction enzyme BsuFI (395 aa).

In terms of assembly, homodimer. The cofactor is Mg(2+).

It carries out the reaction Endonucleolytic cleavage of DNA to give specific double-stranded fragments with terminal 5'-phosphates.. In terms of biological role, a P subtype restriction enzyme that recognizes the double-stranded sequence 5'-CCGG-3' and cleaves after C-1. The polypeptide is Type II restriction enzyme BsuFI (hsdFR) (Bacillus subtilis).